The sequence spans 26 residues: Fumarylacetoacetate hydrolase domain-containing protein 2A (26 aa).

Belongs to the FAH family. Ca(2+) serves as cofactor. Mg(2+) is required as a cofactor.

Its function is as follows. May have hydrolase activity. The chain is Fumarylacetoacetate hydrolase domain-containing protein 2A from Mesocricetus auratus (Golden hamster).